The chain runs to 232 residues: tRNA1(Val) (adenine(37)-N6)-methyltransferase (232 aa).

The protein belongs to the methyltransferase superfamily. tRNA (adenine-N(6)-)-methyltransferase family.

Its subcellular location is the cytoplasm. The catalysed reaction is adenosine(37) in tRNA1(Val) + S-adenosyl-L-methionine = N(6)-methyladenosine(37) in tRNA1(Val) + S-adenosyl-L-homocysteine + H(+). Its function is as follows. Specifically methylates the adenine in position 37 of tRNA(1)(Val) (anticodon cmo5UAC). This is tRNA1(Val) (adenine(37)-N6)-methyltransferase from Haemophilus influenzae (strain ATCC 51907 / DSM 11121 / KW20 / Rd).